The chain runs to 227 residues: MNSINIAIDGPASSGKSTVAKIIAKNLNYTYLDTGAMYRCATYLALQHGYEAQDVSKILGLLAERPISFGKAEDGSQTVFLGTEEVTLAIRQNDVTNNVSWVSAIPEIREELVNQQRRIAKDGAIIMDGRDIGTVVLPDAELKIFLVASVDERAERRFKENQEKGIESDFETLKSEIAARDYKDSHREVSPLEAAEDAIEFDTTGVSIEGVVTFIQEKAEKIIDMKN.

ATP is bound at residue 10 to 18 (GPASSGKST).

This sequence belongs to the cytidylate kinase family. Type 1 subfamily.

Its subcellular location is the cytoplasm. The enzyme catalyses CMP + ATP = CDP + ADP. The catalysed reaction is dCMP + ATP = dCDP + ADP. This chain is Cytidylate kinase, found in Streptococcus agalactiae serotype Ia (strain ATCC 27591 / A909 / CDC SS700).